Here is a 260-residue protein sequence, read N- to C-terminus: Voltage-dependent calcium channel gamma-6 subunit (260 aa).

The disordered stretch occupies residues 14 to 33; the sequence is RRGAAGRRRAHGQGRSGLTP. The span at 15-25 shows a compositional bias: basic residues; sequence RGAAGRRRAHG. Transmembrane regions (helical) follow at residues 43 to 63, 143 to 163, 169 to 189, and 221 to 241; these read LLLAAVGATLAVLSVGTEFWV, VIAVLGLAVMALGCLCIIMVL, FLLRVGAVCFGLSGLLLLVSL, and LGCGVGAGLILLLGAGCFLLL.

This sequence belongs to the PMP-22/EMP/MP20 family. CACNG subfamily. As to quaternary structure, interacts with CACNA1C. Identified in a complex with the L-type calcium channel subunits CACNA1C, CACNA2D1 and either CACNB1 or CACNB2. In terms of tissue distribution, detected in heart left ventricle.

Its subcellular location is the cell membrane. Regulates the activity of L-type calcium channels that contain CACNA1C as pore-forming subunit. The protein is Voltage-dependent calcium channel gamma-6 subunit (CACNG6) of Homo sapiens (Human).